The sequence spans 408 residues: Tripartite motif-containing protein 59 (408 aa).

The RING-type zinc-finger motif lies at 10–60 (CSICYSLFEDPRVLPCSHTFCRSCLEGVIQLSSNFSIWRPLRVPLKCPNCR). A B box-type zinc finger spans residues 92–134 (SDVATCSEHYRQPLNVYCLLDKKLVCGHCLTIGKHNGHPIDDL). Residues C97, H100, C120, and H126 each contribute to the Zn(2+) site. Positions 163–247 (LIEKLKEQKA…LNTSIQKEES (85 aa)) form a coiled coil. The chain crosses the membrane as a helical span at residues 333-353 (ANPLSVTFIFTVIIAIAVLSF).

Belongs to the TRIM/RBCC family. As to quaternary structure, interacts with ECSIT.

Its subcellular location is the endoplasmic reticulum membrane. Its function is as follows. May serve as a multifunctional regulator for innate immune signaling pathways. The sequence is that of Tripartite motif-containing protein 59 (TRIM59) from Gallus gallus (Chicken).